We begin with the raw amino-acid sequence, 631 residues long: MAGVGEGDSGGVERDDIGMVAASPVASRVNGKVDADVVGRFATCCRALGIAVYQRKRPPDLAAARSGFAALTRVAHDQCDAWTGLAAAGDQSIGVLEAASRTATTAGVLQRQVELADNALGFLYDTGLYLRFRATGPDDFHLAYAAALASTGGPEEFAKANHVVSGITERRAGWRAARWLAVVINYRAERWSDVVKLLTPMVNDPDLDEAFSHAAKITLGTALARLGMFAPALSYLEEPDGPVAVAAVDGALAKALVLRAHVDEESASEVLQDLYAAHPENEQVEQALSDTSFGIVTTTAGRIEARTDPWDPATEPGAEDFVDPAAHERKAALLHEAELQLAEFIGLDEVKRQVSRLKSSVAMELVRKQRGLTVAQRTHHLVFAGPPGTGKTTIARVVAKIYCGLGLLKRENIREVHRADLIGQHIGETEAKTNAIIDSALDGVLFLDEAYALVATGAKNDFGLVAIDTLLARMENDRDRLVVIIAGYRADLDKFLDTNEGLRSRFTRNIDFPSYTSHELVEIAHKMAEQRDSVFEQSALHDLEALFAKLAAESTPDTNGISRRSLDIAGNGRFVRNIVERSEEEREFRLDHSEHAGSGEFSDEELMTITADDVGRSVEPLLRGLGLSVRA.

385–392 (GPPGTGKT) serves as a coordination point for ATP.

This sequence belongs to the CbxX/CfxQ family. Part of the ESX-3 / type VII secretion system (T7SS), which is composed of cytosolic and membrane components.

The protein resides in the cytoplasm. Its function is as follows. Part of the ESX-3 specialized secretion system, which is important for iron and zinc uptake or homeostasis. EccA3 exhibits ATPase activity and may provide energy for the export of ESX-3 substrates. This chain is ESX-3 secretion system protein EccA3, found in Mycobacterium tuberculosis (strain CDC 1551 / Oshkosh).